Reading from the N-terminus, the 350-residue chain is Neutral protease 2 homolog SNOG_10522 (350 aa).

The first 18 residues, 1–18 (MKVSSQLAVAALASFATA), serve as a signal peptide directing secretion. A propeptide spanning residues 19 to 180 (ASVDVHKRET…AKALNKRTAI (162 aa)) is cleaved from the precursor. Intrachain disulfides connect Cys184/Cys251 and Cys258/Cys276. His301 is a Zn(2+) binding site. The active site involves Glu302. The Zn(2+) site is built by His305 and Asp316.

This sequence belongs to the peptidase M35 family. Zn(2+) is required as a cofactor.

It localises to the secreted. It carries out the reaction Preferential cleavage of bonds with hydrophobic residues in P1'. Also 3-Asn-|-Gln-4 and 8-Gly-|-Ser-9 bonds in insulin B chain.. Secreted metalloproteinase that allows assimilation of proteinaceous substrates. Shows high activities on basic nuclear substrates such as histone and protamine. This is Neutral protease 2 homolog SNOG_10522 from Phaeosphaeria nodorum (strain SN15 / ATCC MYA-4574 / FGSC 10173) (Glume blotch fungus).